The sequence spans 1074 residues: Probable phospholipid-transporting ATPase tat-5 (1074 aa).

A disordered region spans residues 1–26 (MGKRKKNDESSSSSSQKPCVSSSSDD). Residues 10–26 (SSSSSSQKPCVSSSSDD) show a composition bias toward low complexity. The next 4 membrane-spanning stretches (helical) occupy residues 118 to 138 (FVPIVLFQQFKFFLNLYFLLM), 143 to 163 (FIPAIQIGAPITYWGPLGFVL), 354 to 374 (LTKLLFCFVLVLSSVMVAMKG), and 378 to 398 (LWYRYLMRFILLFSYIIPISL). Aspartate 442 functions as the 4-aspartylphosphate intermediate in the catalytic mechanism. The ATP site is built by aspartate 442, lysine 443, threonine 444, glutamate 524, phenylalanine 570, lysine 575, lysine 594, arginine 623, threonine 624, threonine 704, glycine 705, aspartate 706, arginine 786, and lysine 792. Aspartate 442 contacts Mg(2+). Residue threonine 444 coordinates Mg(2+). A Mg(2+)-binding site is contributed by aspartate 813. 2 residues coordinate ATP: asparagine 816 and aspartate 817. Aspartate 817 is a binding site for Mg(2+). Transmembrane regions (helical) follow at residues 886-906 (AIFSCVFYFASVSLYQGVLMV), 954-974 (IWVLISLYQGAVIMYGALLVF), 978-998 (FIHVVSISFSALIVTELIMVA), 1006-1026 (WAMLLAQALSLGLYMISLILF), and 1038-1058 (WVFISKTTAITAVSCLPLYIV).

This sequence belongs to the cation transport ATPase (P-type) (TC 3.A.3) family. Type IV subfamily. It depends on Mg(2+) as a cofactor.

Its subcellular location is the cell membrane. It catalyses the reaction ATP + H2O + phospholipidSide 1 = ADP + phosphate + phospholipidSide 2.. Functionally, plays a role in regulating membrane trafficking of cargo proteins during embryogenesis. Regulates snx-3 retromer-mediated endosomal sorting of mig-14, a transporter of Wnt egl-20 morphogen. Together with mon-2 and pad-1, may participate in the formation of endosomal carriers that direct mig-14 trafficking back to Golgi, away from lysosomal degradation. Required for Wnt egl-20 gradient formation along the anteroposterior body axis and migration of QL neuroblast descendants toward the posterior part. Maintains phosphatidylethanolamine (PE) asymmetry at the cell membrane and prevents the budding of ectosome vesicles that affect intercellular communication and morphogenesis. This chain is Probable phospholipid-transporting ATPase tat-5 (tat-5), found in Caenorhabditis elegans.